The sequence spans 414 residues: 2,3-diketo-5-methylthiopentyl-1-phosphate enolase (414 aa).

The Proton acceptor role is filled by Lys-99. Substrate contacts are provided by residues Lys-148, 174 to 177, His-265, Gly-338, and 360 to 361; these read KDDE and GG. Positions 174, 176, and 177 each coordinate Mg(2+). Residue Lys-174 is modified to N6-carboxylysine.

It belongs to the RuBisCO large chain family. Type IV subfamily. As to quaternary structure, homodimer. The cofactor is Mg(2+).

The enzyme catalyses 5-methylsulfanyl-2,3-dioxopentyl phosphate = 2-hydroxy-5-methylsulfanyl-3-oxopent-1-enyl phosphate. It participates in amino-acid biosynthesis; L-methionine biosynthesis via salvage pathway; L-methionine from S-methyl-5-thio-alpha-D-ribose 1-phosphate: step 3/6. In terms of biological role, catalyzes the enolization of 2,3-diketo-5-methylthiopentyl-1-phosphate (DK-MTP-1-P) into 2-hydroxy-3-keto-5-methylthiopentenyl-1-phosphate (HK-MTPenyl-1-P). The chain is 2,3-diketo-5-methylthiopentyl-1-phosphate enolase from Bacillus cytotoxicus (strain DSM 22905 / CIP 110041 / 391-98 / NVH 391-98).